A 111-amino-acid polypeptide reads, in one-letter code: MASLLYFILFLLFVCISYYFTYYPTNKLQAAVMETDRENAIIIQRNDEIPTRTLDTAIFTDASTVASAQIYLYYNSNIGKIIMSLNGKKHTFNLYDDNDIRTLLPILLLSK.

A helical; Signal-anchor transmembrane segment spans residues 1–21 (MASLLYFILFLLFVCISYYFT). Residues 22 to 111 (YYPTNKLQAA…TLLPILLLSK (90 aa)) lie on the Virion surface side of the membrane.

This sequence belongs to the orthopoxvirus OPG086 family. As to quaternary structure, interacts with OPG099/L5. Component of the entry fusion complex (EFC) composed of OPG053, OPG076, OPG086, OPG094, OPG095, OPG099, OPG107, OPG143, OPG104, OPG147 and OPG155. Except for OPG095 and OPG053, each of the EFC proteins is required for assembly or stability of the complex. In terms of processing, unglycosylated because produced in viral factories instead of the classic ER -Golgi route.

Its subcellular location is the virion membrane. Its function is as follows. Component of the entry fusion complex (EFC), which consists of 11 proteins. During cell infection, this complex mediates entry of the virion core into the host cytoplasm by a two-step mechanism consisting of lipid mixing of the viral and cellular membranes and subsequent pore formation. This chain is Entry-fusion complex protein OPG086 (OPG086), found in Variola virus (isolate Human/India/Ind3/1967) (VARV).